Consider the following 327-residue polypeptide: Serine/threonine-protein phosphatase alpha-1 isoform (327 aa).

Residues D62, H64, D90, and N122 each coordinate Mn(2+). Catalysis depends on H123, which acts as the Proton donor. Positions 171 and 246 each coordinate Mn(2+). The segment at 308–327 (GSSGRPLTPPRGANNKNKKK) is disordered. A Phosphothreonine modification is found at T315.

Belongs to the PPP phosphatase family. PP-1 subfamily. In terms of assembly, interacts with Nop17l. Mn(2+) serves as cofactor.

It carries out the reaction O-phospho-L-seryl-[protein] + H2O = L-seryl-[protein] + phosphate. The catalysed reaction is O-phospho-L-threonyl-[protein] + H2O = L-threonyl-[protein] + phosphate. This Drosophila melanogaster (Fruit fly) protein is Serine/threonine-protein phosphatase alpha-1 isoform (Pp1alpha-96A).